The primary structure comprises 252 residues: Probable transcriptional regulatory protein Haur_3030 (252 aa).

This sequence belongs to the TACO1 family.

It localises to the cytoplasm. This Herpetosiphon aurantiacus (strain ATCC 23779 / DSM 785 / 114-95) protein is Probable transcriptional regulatory protein Haur_3030.